The following is a 206-amino-acid chain: Small ribosomal subunit protein uS4 (206 aa).

One can recognise an S4 RNA-binding domain in the interval 96-156; that stretch reads SRLDNIVYRL…KKSKNQLRIK (61 aa).

Belongs to the universal ribosomal protein uS4 family. In terms of assembly, part of the 30S ribosomal subunit. Contacts protein S5. The interaction surface between S4 and S5 is involved in control of translational fidelity.

One of the primary rRNA binding proteins, it binds directly to 16S rRNA where it nucleates assembly of the body of the 30S subunit. Functionally, with S5 and S12 plays an important role in translational accuracy. This is Small ribosomal subunit protein uS4 from Buchnera aphidicola subsp. Cinara cedri (strain Cc).